A 290-amino-acid polypeptide reads, in one-letter code: tRNA dimethylallyltransferase (290 aa).

11 to 18 contributes to the ATP binding site; that stretch reads GPTASGKS. 13 to 18 provides a ligand contact to substrate; that stretch reads TASGKS. Interaction with substrate tRNA regions lie at residues 36–39 and 158–162; these read DSMQ and QRIVR.

This sequence belongs to the IPP transferase family. Monomer. Mg(2+) is required as a cofactor.

It carries out the reaction adenosine(37) in tRNA + dimethylallyl diphosphate = N(6)-dimethylallyladenosine(37) in tRNA + diphosphate. Catalyzes the transfer of a dimethylallyl group onto the adenine at position 37 in tRNAs that read codons beginning with uridine, leading to the formation of N6-(dimethylallyl)adenosine (i(6)A). The sequence is that of tRNA dimethylallyltransferase from Bartonella henselae (strain ATCC 49882 / DSM 28221 / CCUG 30454 / Houston 1) (Rochalimaea henselae).